The sequence spans 517 residues: 2,3-bisphosphoglycerate-independent phosphoglycerate mutase (517 aa).

The Mn(2+) site is built by D14 and S64. The active-site Phosphoserine intermediate is S64. Residues H125, 155 to 156 (RD), R187, R193, 259 to 262 (RPDR), and K334 each bind substrate. Mn(2+) contacts are provided by D401, H405, D442, H443, and H461.

Belongs to the BPG-independent phosphoglycerate mutase family. In terms of assembly, monomer. It depends on Mn(2+) as a cofactor.

The enzyme catalyses (2R)-2-phosphoglycerate = (2R)-3-phosphoglycerate. It functions in the pathway carbohydrate degradation; glycolysis; pyruvate from D-glyceraldehyde 3-phosphate: step 3/5. Functionally, catalyzes the interconversion of 2-phosphoglycerate and 3-phosphoglycerate. This chain is 2,3-bisphosphoglycerate-independent phosphoglycerate mutase, found in Symbiobacterium thermophilum (strain DSM 24528 / JCM 14929 / IAM 14863 / T).